Consider the following 209-residue polypeptide: Uracil phosphoribosyltransferase (209 aa).

Residues Arg-79, Arg-104, and 131–139 (DPMLATGGS) contribute to the 5-phospho-alpha-D-ribose 1-diphosphate site. Uracil is bound by residues Ile-194 and 199-201 (GDA). 5-phospho-alpha-D-ribose 1-diphosphate is bound at residue Asp-200.

This sequence belongs to the UPRTase family. It depends on Mg(2+) as a cofactor.

It carries out the reaction UMP + diphosphate = 5-phospho-alpha-D-ribose 1-diphosphate + uracil. Its pathway is pyrimidine metabolism; UMP biosynthesis via salvage pathway; UMP from uracil: step 1/1. With respect to regulation, allosterically activated by GTP. Catalyzes the conversion of uracil and 5-phospho-alpha-D-ribose 1-diphosphate (PRPP) to UMP and diphosphate. In Macrococcus caseolyticus (strain JCSC5402) (Macrococcoides caseolyticum), this protein is Uracil phosphoribosyltransferase.